We begin with the raw amino-acid sequence, 169 residues long: NAD(P)H-quinone oxidoreductase subunit J, chloroplastic (169 aa).

Belongs to the complex I 30 kDa subunit family. As to quaternary structure, NDH is composed of at least 16 different subunits, 5 of which are encoded in the nucleus.

The protein localises to the plastid. The protein resides in the chloroplast thylakoid membrane. It carries out the reaction a plastoquinone + NADH + (n+1) H(+)(in) = a plastoquinol + NAD(+) + n H(+)(out). It catalyses the reaction a plastoquinone + NADPH + (n+1) H(+)(in) = a plastoquinol + NADP(+) + n H(+)(out). NDH shuttles electrons from NAD(P)H:plastoquinone, via FMN and iron-sulfur (Fe-S) centers, to quinones in the photosynthetic chain and possibly in a chloroplast respiratory chain. The immediate electron acceptor for the enzyme in this species is believed to be plastoquinone. Couples the redox reaction to proton translocation, and thus conserves the redox energy in a proton gradient. The sequence is that of NAD(P)H-quinone oxidoreductase subunit J, chloroplastic from Physcomitrium patens (Spreading-leaved earth moss).